A 616-amino-acid polypeptide reads, in one-letter code: MPKYRSATTTHGRNMAGARALWRATGMTDADFGKPIIAVVNSFTQFVPGHVHLRDLGKLVAEQIEAAGGVAKEFNTIAVDDGIAMGHGGMLYSLPSRELIADSVEYMVNAHCADAMVCISNCDKITPGMLMASLRLNIPVIFVSGGPMEAGKTKLSDQIIKLDLVDAMIQGADPKVSDSQSDQVERSACPTCGSCSGMFTANSMNCLTEALGLSQPGNGSLLATHADRKQLFLNAGKRIVELTKRYYEQDDESALPRNIASKAAFENAMTLDIAMGGSTNTVLHLLAAAQEAEIDFTMSDIDKLSRKVPQLCKVAPSTQKYHMEDVHRAGGVIGILGELDRAGLLNRDVKNVLGLTLPQTLEQYDIIVTQDDAVKNMFRAGPAGIRTTQAFSQDCRWDTLDDDRSNGCIRSLEHAYSKDGGLAVLYGNFAENGCIVKTAGVDDSILKFTGPAKVYESQDDAVEAILGGKVVAGDVVVIRYEGPKGGPGMQEMLYPTSFLKSMGLGKACALITDGRFSGGTSGLSIGHVSPEAASGGSIGLIEDGDLIAIDIPNRGIQLQVSDAELAARREAQEARGDKAWTPKNRERQVSFALRAYASLATSADKGAVRDKSKLGG.

D81 provides a ligand contact to Mg(2+). C122 lines the [2Fe-2S] cluster pocket. 2 residues coordinate Mg(2+): D123 and K124. N6-carboxylysine is present on K124. C195 is a [2Fe-2S] cluster binding site. E491 is a Mg(2+) binding site. The active-site Proton acceptor is S517.

The protein belongs to the IlvD/Edd family. Homodimer. The cofactor is [2Fe-2S] cluster. Mg(2+) is required as a cofactor.

The enzyme catalyses (2R)-2,3-dihydroxy-3-methylbutanoate = 3-methyl-2-oxobutanoate + H2O. The catalysed reaction is (2R,3R)-2,3-dihydroxy-3-methylpentanoate = (S)-3-methyl-2-oxopentanoate + H2O. It participates in amino-acid biosynthesis; L-isoleucine biosynthesis; L-isoleucine from 2-oxobutanoate: step 3/4. It functions in the pathway amino-acid biosynthesis; L-valine biosynthesis; L-valine from pyruvate: step 3/4. Its function is as follows. Functions in the biosynthesis of branched-chain amino acids. Catalyzes the dehydration of (2R,3R)-2,3-dihydroxy-3-methylpentanoate (2,3-dihydroxy-3-methylvalerate) into 2-oxo-3-methylpentanoate (2-oxo-3-methylvalerate) and of (2R)-2,3-dihydroxy-3-methylbutanoate (2,3-dihydroxyisovalerate) into 2-oxo-3-methylbutanoate (2-oxoisovalerate), the penultimate precursor to L-isoleucine and L-valine, respectively. The sequence is that of Dihydroxy-acid dehydratase from Escherichia coli O1:K1 / APEC.